The primary structure comprises 850 residues: Lon protease (850 aa).

The 195-residue stretch at L38–I232 folds into the Lon N-terminal domain. G384–T391 provides a ligand contact to ATP. Residues E634 to R815 enclose the Lon proteolytic domain. Residues S721 and K764 contribute to the active site. A disordered region spans residues P819–H850. Over residues K821–S840 the composition is skewed to basic residues. Polar residues predominate over residues R841–H850.

This sequence belongs to the peptidase S16 family. Homohexamer. Organized in a ring with a central cavity.

It is found in the cytoplasm. It catalyses the reaction Hydrolysis of proteins in presence of ATP.. Functionally, ATP-dependent serine protease that mediates the selective degradation of mutant and abnormal proteins as well as certain short-lived regulatory proteins. Required for cellular homeostasis and for survival from DNA damage and developmental changes induced by stress. Degrades polypeptides processively to yield small peptide fragments that are 5 to 10 amino acids long. Binds to DNA in a double-stranded, site-specific manner. The sequence is that of Lon protease from Xanthomonas oryzae pv. oryzae (strain KACC10331 / KXO85).